A 723-amino-acid polypeptide reads, in one-letter code: Heme/hemopexin utilization protein C (723 aa).

Positions 1-21 are cleaved as a signal peptide; the sequence is MRFSKLSLAITTTLVTANALA. A TBDR plug domain is found at 36–147; the sequence is DPSRFAYTPE…LGGVVAMRTP (112 aa). A TBDR beta-barrel domain is found at 158 to 723; it reads KFGVKIRQGY…NAKISAVYSF (566 aa). The short motif at 706-723 is the TonB C-terminal box element; the sequence is SLMEGTGRNAKISAVYSF.

This sequence belongs to the TonB-dependent receptor family.

The protein localises to the cell outer membrane. In terms of biological role, required for utilization of free heme at low concentrations. In Haemophilus influenzae (strain ATCC 51907 / DSM 11121 / KW20 / Rd), this protein is Heme/hemopexin utilization protein C (hxuC).